The sequence spans 271 residues: Neurexophilin-1 (271 aa).

The N-terminal stretch at 1-21 (MQAACWYVLLLLQPTVYLVTC) is a signal peptide. The interval 22 to 97 (ANLTNGGKSE…WDWLRNSTDL (76 aa)) is II. 6 N-linked (GlcNAc...) asparagine glycosylation sites follow: N23, N68, N93, N146, N156, and N162. The tract at residues 98-176 (QEPRPRAKRR…LVPPTKIVEF (79 aa)) is III. The segment at 177-185 (DLAQQTVID) is IV (linker domain). A v (Cys-rich) region spans residues 186-271 (AKDSKSFNCR…HSDTPYFPSG (86 aa)).

This sequence belongs to the neurexophilin family. Post-translationally, may be proteolytically processed at the boundary between the N-terminal non-conserved and the central conserved domain in neuron-like cells.

Its subcellular location is the secreted. May be signaling molecules that resemble neuropeptides. Ligand for alpha-neurexins. In Bos taurus (Bovine), this protein is Neurexophilin-1 (NXPH1).